A 402-amino-acid polypeptide reads, in one-letter code: Phosphoglycerate kinase (402 aa).

Residues 24-26 (DFN), Arg40, 63-66 (HFGR), Arg122, and Arg155 contribute to the substrate site. ATP contacts are provided by residues Lys206, Gly297, Glu328, and 357–360 (GGDS).

The protein belongs to the phosphoglycerate kinase family. As to quaternary structure, monomer.

It is found in the cytoplasm. It catalyses the reaction (2R)-3-phosphoglycerate + ATP = (2R)-3-phospho-glyceroyl phosphate + ADP. The protein operates within carbohydrate degradation; glycolysis; pyruvate from D-glyceraldehyde 3-phosphate: step 2/5. The polypeptide is Phosphoglycerate kinase (Synechococcus sp. (strain ATCC 27144 / PCC 6301 / SAUG 1402/1) (Anacystis nidulans)).